Consider the following 378-residue polypeptide: Coiled-coil domain-containing protein 74A (378 aa).

Disordered stretches follow at residues 1–52 (MSGA…RNLD), 128–211 (GGPS…EEPL), and 301–328 (EGSQRPQAAPEEASFPRDQEATHFPKVS). A compositionally biased stretch (polar residues) spans 34–44 (LRPQSPQLRQS). A coiled-coil region spans residues 47–90 (QKRNLDLEKSLQFLQQQHSEMLAKLHEEIEHLKRENKDLHYKLI). A compositionally biased stretch (basic residues) spans 141-151 (RTHRPGGKRGR). The span at 165–182 (DSLSMSSFQSVKSISNSG) shows a compositional bias: polar residues. Composition is skewed to basic and acidic residues over residues 194 to 205 (QDSKADVSQKAD) and 314 to 323 (SFPRDQEATH).

This Homo sapiens (Human) protein is Coiled-coil domain-containing protein 74A (CCDC74A).